Here is a 339-residue protein sequence, read N- to C-terminus: F-box protein At3g22700 (339 aa).

An F-box domain is found at 1-49; sequence MMSNLPLDLVEEILSRVPATSLKRLRSTCRQWNALLKDRRFTEKHFRKA.

The polypeptide is F-box protein At3g22700 (Arabidopsis thaliana (Mouse-ear cress)).